Reading from the N-terminus, the 1093-residue chain is MASVPAEAETRQRLLRTVKKEVKQIMEEAVTRKFVHEDSSHIISFCAAVEACVLHGLRRRAAGFLRSNKIAALFMKVGKGFPPAEELSRKVQELEQLIESARNQIQGLQENVRKLPKLPNLSPLAIKHLWIRTALFGRVLDKIVHYLVENSSKYYEKEALLMDPVDGPILASLLVGPCALEYTKMKTADHFWTDPSADELVQRHRIHSSHLRQDSPTKRPALCIQKRHSSGSMDDRPSISARDYVESLHQDSRATLLYGKNNVLVQPRDDMEAVPGYLSLHQTADVMTLKWTPNQLMNGSVGDLDYEKSVYWDYAVTIRLEEIVYLHCHQQVDSGGTVVLVSQDGIQRPPFRFPKGGHLLQFLSCLENGLLPHGQLDPPLWSQRGKGKVFPKLRKRSPQGSSESTSSDKEDDEATDYVFRIIYPGTQSEFVPQDLMDVSMNNLPPLWQPSPRKSSCSSCSQSGSADGGSTNGCNHERAPLKLLCDNMKYQILSRAFYGWLAYCRHLSTVRTHLSALVNHMIVSPDLPCDAGQGLTASIWEKYIQDSTTYPEQELLRLIYYGGVQPEIRRAVWPFLLGHYQFGMTEMERKEVDEQIHACYAQTMSEWLGCEAIVRQRERESHAAALAKCSSGASLDSHLHRMLHRDSTISNESSQSCSSGRQNLRLQSDSSSSTQVFESVDEVEQTEAEGRSEEKHPKIPNGNPANGTCSPDSGHPSSHNFSSGLSEHSEPSLSTEDSVLDAQRSLPAVFRPGDSSVEDGQSSEATTSRDEAPREELAVQDSLESDLLANESLEEFMSIPGSLDVALPEKDGAVMDGWPGEADKPSRADSEDNLSEEPEMESLFPALASLAVTSSANNEASPVSSSGVTYSPELLDLYTVNLHRIEKDVQRCDRSYWYFTAANLEKLRNIMCSYIWQHIEIGYVQGMCDLLAPLLVILDDEALAFSCFTELMKRMNQNFPHGGAMDTHFANMRSLIQILDSELFELMHQNGDYTHFYFCYRWFLLDFKRELVYDDVFSVWETIWAAKHVSSAHYVLFIALALVEVYRDIILENNMDFTDIIKFFNEMAERHNAKQILQLARDLVHKVQILIENK.

One can recognise an RUN domain in the interval 36 to 190; the sequence is HEDSSHIISF…EYTKMKTADH (155 aa). Positions 256 to 297 are important for interaction with RAB9A and RAB9B; sequence LLYGKNNVLVQPRDDMEAVPGYLSLHQTADVMTLKWTPNQLM. Residues 301–350 form a required for interaction with RAP family members region; the sequence is VGDLDYEKSVYWDYAVTIRLEEIVYLHCHQQVDSGGTVVLVSQDGIQRPP. Disordered regions lie at residues 377 to 412, 645 to 778, and 810 to 838; these read DPPL…KEDD, DSTI…ELAV, and DGAV…EEPE. A compositionally biased stretch (basic residues) spans 385–397; the sequence is GKGKVFPKLRKRS. The region spanning 562 to 1026 is the Rab-GAP TBC domain; the sequence is GVQPEIRRAV…SVWETIWAAK (465 aa). Residues 647–676 are compositionally biased toward polar residues; sequence TISNESSQSCSSGRQNLRLQSDSSSSTQVF. A compositionally biased stretch (basic and acidic residues) spans 687-696; the sequence is AEGRSEEKHP. A compositionally biased stretch (polar residues) spans 702 to 736; the sequence is NPANGTCSPDSGHPSSHNFSSGLSEHSEPSLSTED. Composition is skewed to basic and acidic residues over residues 766–776 and 820–829; these read TSRDEAPREEL and EADKPSRADS.

It belongs to the RUTBC family. Interacts with RAB9A (GTP-bound form) and RAB9B. Interacts with RAB3A, RAB4A, RAB5A, RAB8A, RAB11A, RAP1A, RAP1B, RAP2A and RAP2B. No interaction with RAB27A. In terms of tissue distribution, expressed only in brain.

It is found in the golgi apparatus. Its subcellular location is the trans-Golgi network. It localises to the cytoplasm. The protein resides in the cytoplasmic vesicle membrane. Functionally, interacts with numerous Rab family members, functioning as Rab effector for some, and as GTPase activator for others. Promotes GTP hydrolysis by RAB34 and RAB36. Probably functions as a GTPase effector with RAB9A and RAB9B; does not stimulate GTP hydrolysis with RAB9A and RAB9B. This Mus musculus (Mouse) protein is Small G protein signaling modulator 1 (Sgsm1).